The sequence spans 83 residues: Kunitz-type serine protease inhibitor carinatin-1 (83 aa).

An N-terminal signal peptide occupies residues 1–24 (MSSGGLLLLLGLLTLWEGLTPVSS). A BPTI/Kunitz inhibitor domain is found at 31–81 (CELPDDRGPCRGIFHAFYYNPDQRQCLEFIYGGCYGNANNFKTIDECERTC). Disulfide bonds link Cys-31–Cys-81, Cys-40–Cys-64, and Cys-56–Cys-77.

The protein belongs to the venom Kunitz-type family. As to expression, expressed by the venom gland.

It is found in the secreted. Functionally, serine protease inhibitor. The chain is Kunitz-type serine protease inhibitor carinatin-1 from Tropidechis carinatus (Australian rough-scaled snake).